The following is a 227-amino-acid chain: uncharacterized protein (227 aa).

Helical transmembrane passes span 25–45 (LLGFSFIPASAGAALAANAGF), 49–69 (AAFGSRWIGFAVVLAFFYGMI), 80–100 (TGVTLLMVFTFGMGVLIGPVL), 111–131 (KIVGIAAAMTAAVFLTMSALA), 144–164 (FLTVGAVILMVAVVANLFLGI), 165–185 (PALALTISAGFVLFSSLMIMW), and 201–221 (AALTLFISLYNIFSSLLNILL).

It localises to the cell membrane. This is an uncharacterized protein from Neisseria meningitidis serogroup B (strain ATCC BAA-335 / MC58).